The following is a 211-amino-acid chain: MFIKICGIKTPEELRIVENYGNATGVILECASKRRIGFETAKNLVNLANIPVFAVSTASDVSVWENIIEFTGTNYLQMHSDIDQKAIDFIKNEYGCFIMKSFKIPETSTSPEIDAEKIISEIESYEVDRILLDTGKGCGQTHDHRVSQIIAKKFDIVLAGGLDPDNVLNIVKYVKPFGIDVSSGVENNNSKDEELIKRFCENVKLGENYEM.

It belongs to the TrpF family.

It catalyses the reaction N-(5-phospho-beta-D-ribosyl)anthranilate = 1-(2-carboxyphenylamino)-1-deoxy-D-ribulose 5-phosphate. It participates in amino-acid biosynthesis; L-tryptophan biosynthesis; L-tryptophan from chorismate: step 3/5. The chain is N-(5'-phosphoribosyl)anthranilate isomerase from Methanococcus maripaludis (strain DSM 14266 / JCM 13030 / NBRC 101832 / S2 / LL).